We begin with the raw amino-acid sequence, 89 residues long: MEAARKALAVVAVLGAGGGVGSILFALVTPGELQKQLMLQEMPERDSRRRDEAVRTKELVMATLKDAAATKENVAWRRNWTVRGDGRSA.

Over 1 to 7 (MEAARKA) the chain is Mitochondrial matrix. A helical membrane pass occupies residues 8–28 (LAVVAVLGAGGGVGSILFALV). Residues 23–80 (ILFALVTPGELQKQLMLQEMPERDSRRRDEAVRTKELVMATLKDAAATKENVAWRRNW) form a mediates lipid-binding region. The Mitochondrial intermembrane segment spans residues 29–89 (TPGELQKQLM…WTVRGDGRSA (61 aa)).

It belongs to the UQCC3 family. In terms of assembly, associates with the ubiquinol-cytochrome c reductase complex (mitochondrial respiratory chain complex III(CIII) or cytochrome b-c1 complex). Interacts with UQCC1. Forms a complex, named COMC, composed of UQCC1, UQCC2; UQCC3 and UQCC4; mediates MT-CYB hemylation and association with the first nuclear-encoded complex III subunit UQCRQ. In terms of processing, probably cleaved by OMA1 under mitochondrial stress conditions.

It is found in the mitochondrion inner membrane. Required for the assembly of the ubiquinol-cytochrome c reductase complex (mitochondrial respiratory chain complex III or cytochrome b-c1 complex), mediating cytochrome b recruitment and probably stabilization within the complex. Thereby, plays an important role in ATP production by mitochondria. Cardiolipin-binding protein, it may also control the cardiolipin composition of mitochondria membranes and their morphology. The chain is Ubiquinol-cytochrome-c reductase complex assembly factor 3 from Rattus norvegicus (Rat).